The primary structure comprises 348 residues: Large ribosomal subunit protein uL10 (348 aa).

The interval 291 to 348 (LPEELRGVSAADTGAAEEEESTDEEAADADQADAAEDDDAADDDGDDEDAGDALGSLF) is disordered. Positions 305–341 (AAEEEESTDEEAADADQADAAEDDDAADDDGDDEDAG) are enriched in acidic residues.

It belongs to the universal ribosomal protein uL10 family. In terms of assembly, part of the 50S ribosomal subunit. Forms part of the ribosomal stalk which helps the ribosome interact with GTP-bound translation factors. Forms a heptameric L10(L12)2(L12)2(L12)2 complex, where L10 forms an elongated spine to which the L12 dimers bind in a sequential fashion.

Functionally, forms part of the ribosomal stalk, playing a central role in the interaction of the ribosome with GTP-bound translation factors. This Haloferax volcanii (strain ATCC 29605 / DSM 3757 / JCM 8879 / NBRC 14742 / NCIMB 2012 / VKM B-1768 / DS2) (Halobacterium volcanii) protein is Large ribosomal subunit protein uL10.